The sequence spans 437 residues: Chaperone SurA (437 aa).

A signal peptide spans 1–22; sequence MKNWKFPLISTLLLLLTINVHA. PpiC domains lie at 173–274 and 283–383; these read TVQY…KIDD and VTEV…EVLE.

It is found in the periplasm. It catalyses the reaction [protein]-peptidylproline (omega=180) = [protein]-peptidylproline (omega=0). In terms of biological role, chaperone involved in the correct folding and assembly of outer membrane proteins. Recognizes specific patterns of aromatic residues and the orientation of their side chains, which are found more frequently in integral outer membrane proteins. May act in both early periplasmic and late outer membrane-associated steps of protein maturation. The sequence is that of Chaperone SurA from Aliivibrio fischeri (strain ATCC 700601 / ES114) (Vibrio fischeri).